Reading from the N-terminus, the 446-residue chain is N-succinylarginine dihydrolase (446 aa).

Residues 19–28 (AGLSFGNEAS), Asn-110, and 137–138 (HR) each bind substrate. Residue Glu-174 is part of the active site. Arg-213 lines the substrate pocket. The active site involves His-249. Substrate is bound by residues Asp-251 and Asn-364. Cys-370 functions as the Nucleophile in the catalytic mechanism.

This sequence belongs to the succinylarginine dihydrolase family. As to quaternary structure, homodimer.

The catalysed reaction is N(2)-succinyl-L-arginine + 2 H2O + 2 H(+) = N(2)-succinyl-L-ornithine + 2 NH4(+) + CO2. It functions in the pathway amino-acid degradation; L-arginine degradation via AST pathway; L-glutamate and succinate from L-arginine: step 2/5. In terms of biological role, catalyzes the hydrolysis of N(2)-succinylarginine into N(2)-succinylornithine, ammonia and CO(2). The polypeptide is N-succinylarginine dihydrolase (Acinetobacter baylyi (strain ATCC 33305 / BD413 / ADP1)).